A 469-amino-acid polypeptide reads, in one-letter code: Septin homolog spn1 (469 aa).

Positions 1 to 58 (MASMVLADGMPTVKDDSTRSRGSDVDSFTSTDNVTQINVEAAISENKNEEKPIQDNSE) are disordered. The segment covering 13–24 (VKDDSTRSRGSD) has biased composition (basic and acidic residues). Residues 26–38 (DSFTSTDNVTQIN) are compositionally biased toward polar residues. The region spanning 92-367 (QGFNFNVLVL…EAYRTERLLS (276 aa)) is the Septin-type G domain. The tract at residues 102–109 (GESGSGKS) is G1 motif. Residues 102–109 (GESGSGKS), T139, G165, 244–252 (KADTLTDDE), and R317 contribute to the GTP site. The interval 162 to 165 (DTPG) is G3 motif. Residues 243–246 (AKAD) are G4 motif. A coiled-coil region spans residues 383 to 469 (SAKLEEERAL…NEKSKRKFFK (87 aa)).

Belongs to the TRAFAC class TrmE-Era-EngA-EngB-Septin-like GTPase superfamily. Septin GTPase family. As to quaternary structure, component of the septin complex composed of two copies of each spn1, spn2, spn3 and spn4.

It is found in the cytoplasm. It localises to the cell cortex. In terms of biological role, plays a role in the cell cycle. Involved in a late stage of septum formation leading to the separation of the daughter cells. This Schizosaccharomyces pombe (strain 972 / ATCC 24843) (Fission yeast) protein is Septin homolog spn1 (spn1).